Consider the following 469-residue polypeptide: Gustatory receptor for sugar taste 64f (469 aa).

At 1–117 (MKILPKLERK…SFSWRNIRTC (117 aa)) the chain is on the cytoplasmic side. A helical membrane pass occupies residues 118–138 (FSLLFIASSLANFGLSLFKVL). Residues 139 to 146 (NNPISFNS) lie on the Extracellular side of the membrane. Residues 147–167 (IKPIIFRGSVLLVLIVALNLA) traverse the membrane as a helical segment. Residues 168–199 (RQWPQLMMYWHTVEKDLPQYKTQLTKWKMGHT) are Cytoplasmic-facing. The chain crosses the membrane as a helical span at residues 200–220 (ISMVMLLGMMLSFAEHILSMV). The Extracellular segment spans residues 221 to 265 (SAINYASFCNRTADPIQNYFLRTNDEIFFVTSYSTTLALWGKFQN). N-linked (GlcNAc...) asparagine glycosylation occurs at Asn230. A helical membrane pass occupies residues 266–286 (VFSTFIWNYMDLFVMIVSIGL). Residues 287–330 (ASKFRQLNDDLRNFKGMNMAPSYWSERRIQYRNICILCDKMDDA) are Cytoplasmic-facing. A helical transmembrane segment spans residues 331-351 (ISLITMVSFSNNLYFICVQLL). The Extracellular portion of the chain corresponds to 352–353 (RS). A helical membrane pass occupies residues 354–374 (LNTMPSVAHAVYFYFSLIFLI). The Cytoplasmic portion of the chain corresponds to 375–435 (GRTLAVSLYS…GMKFFHLTRK (61 aa)). A helical membrane pass occupies residues 436-456 (LVLSVAGTIVTYELVLIQFHE). Over 457-469 (DNDLWDCDQSYYS) the chain is Extracellular.

This sequence belongs to the insect chemoreceptor superfamily. Gustatory receptor (GR) family. Gr5a subfamily. Expressed in Gr5a-expressing sugar-sensing cells.

It localises to the cell membrane. Its function is as follows. One of the few identified sugar gustatory receptors identified so far and which promotes the starvation-induced increase of feeding motivation. Required in combination with Gr64a to detect sucrose, maltose, and glucose. This chain is Gustatory receptor for sugar taste 64f (Gr64f), found in Drosophila melanogaster (Fruit fly).